The following is a 225-amino-acid chain: E3 ubiquitin-protein ligase ATL76 (225 aa).

Residues 59-79 (LMLLSVLICGIICCLGLHYII) form a helical membrane-spanning segment. An RING-type; atypical zinc finger spans residues 135-177 (CVICLSDFVSGEQLRLLPKCNHGFHVRCIDKWLQHHLTCPKCR).

This sequence belongs to the RING-type zinc finger family. ATL subfamily.

The protein localises to the membrane. The catalysed reaction is S-ubiquitinyl-[E2 ubiquitin-conjugating enzyme]-L-cysteine + [acceptor protein]-L-lysine = [E2 ubiquitin-conjugating enzyme]-L-cysteine + N(6)-ubiquitinyl-[acceptor protein]-L-lysine.. It functions in the pathway protein modification; protein ubiquitination. Functionally, E3 ubiquitin-protein ligase able to catalyze polyubiquitination with ubiquitin-conjugating enzyme E2 UBC8 in vitro. The polypeptide is E3 ubiquitin-protein ligase ATL76 (ATL76) (Arabidopsis thaliana (Mouse-ear cress)).